The primary structure comprises 161 residues: Mediator of RNA polymerase II transcription subunit 10 (161 aa).

This sequence belongs to the Mediator complex subunit 10 family. Component of the Mediator complex.

It localises to the nucleus. Component of the Mediator complex, a coactivator involved in the regulated transcription of nearly all RNA polymerase II-dependent genes. Mediator functions as a bridge to convey information from gene-specific regulatory proteins to the basal RNA polymerase II transcription machinery. Mediator is recruited to promoters by direct interactions with regulatory proteins and serves as a scaffold for the assembly of a functional preinitiation complex with RNA polymerase II and the general transcription factors. This chain is Mediator of RNA polymerase II transcription subunit 10 (NUT2), found in Kluyveromyces lactis (strain ATCC 8585 / CBS 2359 / DSM 70799 / NBRC 1267 / NRRL Y-1140 / WM37) (Yeast).